Consider the following 351-residue polypeptide: Anthranilate phosphoribosyltransferase (351 aa).

5-phospho-alpha-D-ribose 1-diphosphate contacts are provided by residues G80, 83–84, T88, 90–93, 108–116, and S120; these read GD, NIST, and KHGNRSVTS. G80 provides a ligand contact to anthranilate. A Mg(2+)-binding site is contributed by S92. Residue N111 participates in anthranilate binding. R166 contacts anthranilate. 2 residues coordinate Mg(2+): D229 and E230.

Belongs to the anthranilate phosphoribosyltransferase family. In terms of assembly, homodimer. Mg(2+) serves as cofactor.

The catalysed reaction is N-(5-phospho-beta-D-ribosyl)anthranilate + diphosphate = 5-phospho-alpha-D-ribose 1-diphosphate + anthranilate. Its pathway is amino-acid biosynthesis; L-tryptophan biosynthesis; L-tryptophan from chorismate: step 2/5. Its function is as follows. Catalyzes the transfer of the phosphoribosyl group of 5-phosphorylribose-1-pyrophosphate (PRPP) to anthranilate to yield N-(5'-phosphoribosyl)-anthranilate (PRA). The polypeptide is Anthranilate phosphoribosyltransferase (Chlorobium chlorochromatii (strain CaD3)).